Consider the following 540-residue polypeptide: Probable ATP-dependent RNA helicase DDX28 (540 aa).

The Mitochondrial targeting signal motif lies at 3 to 18 (LAGPSRLLALAVRLLL). A Q motif motif is present at residues 126–156 (GSFVDLGLEPRVLLALQEAVPEVVQPTSVQS). In terms of domain architecture, Helicase ATP-binding spans 159 to 351 (IPPLLRGRHL…SKVTSPDSLT (193 aa)). 172–179 (AETGSGKT) provides a ligand contact to ATP. The Nuclear export signal signature appears at 180–191 (LSYLLPLFQRLL). The short motif at 286–289 (DEVD) is the DEAD element. The Helicase C-terminal domain occupies 377–536 (KVTELVQILK…GLASSVGDPL (160 aa)). The Nuclear localization signal signature appears at 520-523 (RRRR).

Belongs to the DEAD box helicase family. In terms of assembly, monomer. Found in a complex with GRSF1, DHX30, FASTKD2 and FASTKD5. Associates with the 16S mitochondrial rRNA (16S mt-rRNA) and with the mitochondrial ribosome large subunit (39S).

The protein resides in the nucleus. It is found in the mitochondrion. It localises to the mitochondrion matrix. The protein localises to the mitochondrion nucleoid. The catalysed reaction is ATP + H2O = ADP + phosphate + H(+). Functionally, plays an essential role in facilitating the proper assembly of the mitochondrial large ribosomal subunit and its helicase activity is essential for this function. May be involved in RNA processing or transport. Has RNA and Mg(2+)-dependent ATPase activity. The protein is Probable ATP-dependent RNA helicase DDX28 (Ddx28) of Mus musculus (Mouse).